Here is a 521-residue protein sequence, read N- to C-terminus: Bifunctional purine biosynthesis protein PurH (521 aa).

The MGS-like domain occupies 1–147 (MGEITRALIS…KNWEGVTVLV (147 aa)).

Belongs to the PurH family.

The catalysed reaction is (6R)-10-formyltetrahydrofolate + 5-amino-1-(5-phospho-beta-D-ribosyl)imidazole-4-carboxamide = 5-formamido-1-(5-phospho-D-ribosyl)imidazole-4-carboxamide + (6S)-5,6,7,8-tetrahydrofolate. It carries out the reaction IMP + H2O = 5-formamido-1-(5-phospho-D-ribosyl)imidazole-4-carboxamide. Its pathway is purine metabolism; IMP biosynthesis via de novo pathway; 5-formamido-1-(5-phospho-D-ribosyl)imidazole-4-carboxamide from 5-amino-1-(5-phospho-D-ribosyl)imidazole-4-carboxamide (10-formyl THF route): step 1/1. It functions in the pathway purine metabolism; IMP biosynthesis via de novo pathway; IMP from 5-formamido-1-(5-phospho-D-ribosyl)imidazole-4-carboxamide: step 1/1. The chain is Bifunctional purine biosynthesis protein PurH from Acidithiobacillus ferrooxidans (strain ATCC 53993 / BNL-5-31) (Leptospirillum ferrooxidans (ATCC 53993)).